The following is a 1081-amino-acid chain: DNA polymerase delta catalytic subunit (1081 aa).

The tract at residues 1–22 (MTSKRPGGSSFQPEVKRKRESD) is disordered. Residues C981, C984, C998, and C1001 each coordinate Zn(2+). The CysA-type zinc-finger motif lies at 981–1001 (CLGCKSVLPRAESENAVCKHC). Positions 1030, 1033, 1043, and 1048 each coordinate [4Fe-4S] cluster. Positions 1030 to 1048 (CQNCAKTMQDKVNCSARDC) match the CysB motif motif.

The protein belongs to the DNA polymerase type-B family. In terms of assembly, heterodimer with subunits of 125 kDa and 50 kDa. The 125 kDa subunit contains the polymerase active site and most likely the active site for the 3'-5' exonuclease activity. The cofactor is [4Fe-4S] cluster.

Its subcellular location is the nucleus. It catalyses the reaction DNA(n) + a 2'-deoxyribonucleoside 5'-triphosphate = DNA(n+1) + diphosphate. In terms of biological role, possesses two enzymatic activities: DNA synthesis (polymerase) and an exonucleolytic activity that degrades single stranded DNA in the 3'- to 5'-direction. Required with its accessory proteins (proliferating cell nuclear antigen (PCNA) and replication factor C (RFC) or activator 1) for leading strand synthesis. Also involved in completing Okazaki fragments initiated by the DNA polymerase alpha/primase complex. The protein is DNA polymerase delta catalytic subunit of Caenorhabditis elegans.